A 521-amino-acid chain; its full sequence is Protein translocase subunit SecD (521 aa).

6 helical membrane passes run 8 to 28, 359 to 379, 388 to 408, 410 to 430, 459 to 479, and 483 to 503; these read LKLA…LPNG, AGIL…VLFY, IALL…EATL, LPGM…NILI, IVDS…FGTG, and GFAL…LLLS.

It belongs to the SecD/SecF family. SecD subfamily. As to quaternary structure, forms a complex with SecF. Part of the essential Sec protein translocation apparatus which comprises SecA, SecYEG and auxiliary proteins SecDF-YajC and YidC.

Its subcellular location is the cell inner membrane. Part of the Sec protein translocase complex. Interacts with the SecYEG preprotein conducting channel. SecDF uses the proton motive force (PMF) to complete protein translocation after the ATP-dependent function of SecA. This is Protein translocase subunit SecD from Acetobacter pasteurianus (strain NBRC 105184 / IFO 3283-01).